Reading from the N-terminus, the 288-residue chain is N-acetyltransferase ECO1 (288 aa).

Positions 1-50 (MKRDITQLLSPELSQSSSRNDKKRKPTNSNKKVQTVLNFPSSSPNASQST) are disordered. Over residues 7 to 18 (QLLSPELSQSSS) the composition is skewed to low complexity. A compositionally biased stretch (polar residues) spans 27–50 (TNSNKKVQTVLNFPSSSPNASQST). The CCHH-type zinc finger occupies 50–74 (TTCPTCGMTYYSHVSKDNDVHNKYH).

This sequence belongs to the acetyltransferase family. ECO subfamily.

The protein localises to the nucleus. Functionally, probable acetyltransferase required for the establishment of sister chromatid cohesion and couple the processes of cohesion and DNA replication to ensure that only sister chromatids become paired together. In contrast to the structural cohesins, the deposition and establishment factors are required only during S phase. Acts by acetylating the cohesin complex component SMC3. The chain is N-acetyltransferase ECO1 (ECO1) from Debaryomyces hansenii (strain ATCC 36239 / CBS 767 / BCRC 21394 / JCM 1990 / NBRC 0083 / IGC 2968) (Yeast).